Reading from the N-terminus, the 127-residue chain is Glycine cleavage system H protein (127 aa).

One can recognise a Lipoyl-binding domain in the interval 24 to 105 (TALVGITDFA…YGEGWMVKMK (82 aa)). Lys65 carries the N6-lipoyllysine modification.

It belongs to the GcvH family. The glycine cleavage system is composed of four proteins: P, T, L and H. The cofactor is (R)-lipoate.

The glycine cleavage system catalyzes the degradation of glycine. The H protein shuttles the methylamine group of glycine from the P protein to the T protein. The chain is Glycine cleavage system H protein from Chlorobium phaeovibrioides (strain DSM 265 / 1930) (Prosthecochloris vibrioformis (strain DSM 265)).